Consider the following 88-residue polypeptide: EGSGGSGSSGNFTTASNIHMSSVTNTSIAGTGGTGTGTGTGTGTGTGTGTGTGTGTGTGTGNGSASSNYRGGGVAIQPVTLTESLLNK.

The disordered stretch occupies residues 23–88 (VTNTSIAGTG…VTLTESLLNK (66 aa)). Repeat copies occupy residues 30 to 31 (GT), 33 to 34 (GT), 35 to 36 (GT), 37 to 38 (GT), 39 to 40 (GT), 41 to 42 (GT), 43 to 44 (GT), 45 to 46 (GT), 47 to 48 (GT), 49 to 50 (GT), 51 to 52 (GT), 53 to 54 (GT), 55 to 56 (GT), 57 to 58 (GT), 59 to 60 (GT), and 61 to 62 (GN). Residues 30-62 (GTGGTGTGTGTGTGTGTGTGTGTGTGTGTGTGN) form a 16 X 2 AA tandem repeats of G-[TN] region. Residues 30–62 (GTGGTGTGTGTGTGTGTGTGTGTGTGTGTGTGN) show a composition bias toward gly residues. The span at 79–88 (VTLTESLLNK) shows a compositional bias: polar residues.

As to quaternary structure, forms a heterodimer with timeless (TIM); the complex then translocates into the nucleus. Post-translationally, phosphorylated with a circadian rhythmicity, probably by the double-time protein (dbt). Phosphorylation could be implicated in the stability of per monomer and in the formation of heterodimer per-tim.

It localises to the nucleus. It is found in the cytoplasm. Its subcellular location is the perinuclear region. In terms of biological role, essential for biological clock functions. Determines the period length of circadian and ultradian rhythms; an increase in PER dosage leads to shortened circadian rhythms and a decrease leads to lengthened circadian rhythms. Essential for the circadian rhythmicity of locomotor activity, eclosion behavior, and for the rhythmic component of the male courtship song that originates in the thoracic nervous system. The biological cycle depends on the rhythmic formation and nuclear localization of the TIM-PER complex. Light induces the degradation of TIM, which promotes elimination of PER. Nuclear activity of the heterodimer coordinatively regulates PER and TIM transcription through a negative feedback loop. Behaves as a negative element in circadian transcriptional loop. Does not appear to bind DNA, suggesting indirect transcriptional inhibition. The polypeptide is Period circadian protein (per) (Drosophila teissieri (Fruit fly)).